The chain runs to 161 residues: 18.5 kDa class I heat shock protein (161 aa).

The 115-residue stretch at 47-161 folds into the sHSP domain; sequence ENSAFVSTRV…PDVKAIEISG (115 aa).

This sequence belongs to the small heat shock protein (HSP20) family. As to quaternary structure, forms oligomeric structures.

It is found in the cytoplasm. The polypeptide is 18.5 kDa class I heat shock protein (HSP18.5-C) (Glycine max (Soybean)).